Consider the following 255-residue polypeptide: tRNA (guanine-N(1)-)-methyltransferase (255 aa).

S-adenosyl-L-methionine contacts are provided by residues Gly113 and 133 to 138 (IGDYVL).

Belongs to the RNA methyltransferase TrmD family. As to quaternary structure, homodimer.

The protein resides in the cytoplasm. It carries out the reaction guanosine(37) in tRNA + S-adenosyl-L-methionine = N(1)-methylguanosine(37) in tRNA + S-adenosyl-L-homocysteine + H(+). Its function is as follows. Specifically methylates guanosine-37 in various tRNAs. The chain is tRNA (guanine-N(1)-)-methyltransferase from Salmonella choleraesuis (strain SC-B67).